A 176-amino-acid polypeptide reads, in one-letter code: MDLPGPIHDFLLVFLGSGLILGGLGVVLLTNPIYSAFSLGLVFVCISLFYIPSNSHFVAAAQLLIYVGAINVLIIFAVMFMNGSEYYKDFNLWTVGDGVTSVVCTSIFASLITTILDTSWYGIIWTTRSNQIIEQDLISNSQQIGIHLSTDFFLPFELISIILLVALIGAIAVARQ.

Helical transmembrane passes span 10–30, 32–52, 61–81, 93–115, and 152–172; these read FLLV…VLLT, PIYS…FYIP, AQLL…VMFM, WTVG…ITTI, and FFLP…GAIA.

This sequence belongs to the complex I subunit 6 family. In terms of assembly, NDH is composed of at least 16 different subunits, 5 of which are encoded in the nucleus.

The protein localises to the plastid. It is found in the chloroplast thylakoid membrane. The catalysed reaction is a plastoquinone + NADH + (n+1) H(+)(in) = a plastoquinol + NAD(+) + n H(+)(out). It catalyses the reaction a plastoquinone + NADPH + (n+1) H(+)(in) = a plastoquinol + NADP(+) + n H(+)(out). Its function is as follows. NDH shuttles electrons from NAD(P)H:plastoquinone, via FMN and iron-sulfur (Fe-S) centers, to quinones in the photosynthetic chain and possibly in a chloroplast respiratory chain. The immediate electron acceptor for the enzyme in this species is believed to be plastoquinone. Couples the redox reaction to proton translocation, and thus conserves the redox energy in a proton gradient. The protein is NAD(P)H-quinone oxidoreductase subunit 6, chloroplastic (ndhG) of Vitis vinifera (Grape).